A 369-amino-acid polypeptide reads, in one-letter code: UPF0284 protein sll1500 (369 aa).

The protein belongs to the UPF0284 family.

The sequence is that of UPF0284 protein sll1500 from Synechocystis sp. (strain ATCC 27184 / PCC 6803 / Kazusa).